Reading from the N-terminus, the 213-residue chain is Ribosomal RNA large subunit methyltransferase E (213 aa).

Gly59, Phe61, Asp79, Asp97, and Asp121 together coordinate S-adenosyl-L-methionine. The active-site Proton acceptor is Lys161.

This sequence belongs to the class I-like SAM-binding methyltransferase superfamily. RNA methyltransferase RlmE family.

The protein resides in the cytoplasm. It catalyses the reaction uridine(2552) in 23S rRNA + S-adenosyl-L-methionine = 2'-O-methyluridine(2552) in 23S rRNA + S-adenosyl-L-homocysteine + H(+). Its function is as follows. Specifically methylates the uridine in position 2552 of 23S rRNA at the 2'-O position of the ribose in the fully assembled 50S ribosomal subunit. The protein is Ribosomal RNA large subunit methyltransferase E of Myxococcus xanthus (strain DK1622).